The sequence spans 98 residues: Small ribosomal subunit protein bS20 (98 aa).

Positions 1-12 (MAPKKTTKKGGP) are enriched in basic residues. A disordered region spans residues 1–20 (MAPKKTTKKGGPQKRPSAEK).

Belongs to the bacterial ribosomal protein bS20 family.

Its function is as follows. Binds directly to 16S ribosomal RNA. The polypeptide is Small ribosomal subunit protein bS20 (Chlamydia caviae (strain ATCC VR-813 / DSM 19441 / 03DC25 / GPIC) (Chlamydophila caviae)).